A 268-amino-acid chain; its full sequence is Tryptophan synthase alpha chain (268 aa).

Active-site proton acceptor residues include glutamate 49 and aspartate 60.

This sequence belongs to the TrpA family. Tetramer of two alpha and two beta chains.

The catalysed reaction is (1S,2R)-1-C-(indol-3-yl)glycerol 3-phosphate + L-serine = D-glyceraldehyde 3-phosphate + L-tryptophan + H2O. It participates in amino-acid biosynthesis; L-tryptophan biosynthesis; L-tryptophan from chorismate: step 5/5. In terms of biological role, the alpha subunit is responsible for the aldol cleavage of indoleglycerol phosphate to indole and glyceraldehyde 3-phosphate. The polypeptide is Tryptophan synthase alpha chain (Shigella sonnei (strain Ss046)).